We begin with the raw amino-acid sequence, 150 residues long: UPF0756 membrane protein CGSHiEE_06715 (150 aa).

The next 4 helical transmembrane spans lie at 1 to 21, 52 to 72, 81 to 101, and 123 to 143; these read MTLQ…LGVL, YGVK…LVSG, GFVS…AWLA, and IIGV…AGIL.

Belongs to the UPF0756 family.

It is found in the cell membrane. This is UPF0756 membrane protein CGSHiEE_06715 from Haemophilus influenzae (strain PittEE).